The sequence spans 361 residues: Probable mannose-1-phosphate guanylyltransferase 3 (361 aa).

GDP-alpha-D-mannose contacts are provided by L6 and V7. Residues G9, G11, T12, R13, and K23 each coordinate diphosphate. GDP-alpha-D-mannose-binding residues include G85, N109, D111, G146, and N173.

Belongs to the transferase hexapeptide repeat family.

It catalyses the reaction alpha-D-mannose 1-phosphate + GTP + H(+) = GDP-alpha-D-mannose + diphosphate. Its pathway is nucleotide-sugar biosynthesis; GDP-alpha-D-mannose biosynthesis; GDP-alpha-D-mannose from alpha-D-mannose 1-phosphate (GTP route): step 1/1. Catalyzes a reaction of the Smirnoff-Wheeler pathway, the major route to ascorbate biosynthesis in plants. This chain is Probable mannose-1-phosphate guanylyltransferase 3, found in Oryza sativa subsp. japonica (Rice).